The primary structure comprises 380 residues: METQGKVITCKAAVAWGAGEPLVMEDVKVDPPQRLEVRIRILFTSICHTDLSAWKGENEAQRAYPRILGHEAAGIVESVGEGVEEMMAGDHVLPIFTGECGDCRVCKRDGANLCERFRVDPMKKVMVTDGKTRFFTSKDNKPIYHFLNTSTFSEYTVIDSACVLKVDPLFPLEKISLLSCGVSTGVGAAWNVADIQPASTVAIFGLGAVGLAVAEGARARGASKIIGIDINPDKFQLGREAGISEFINPKESDKAVHERVMEITEGGVEYSFECAGSIEALREAFLSTNSGVGVTVMLGVHASPQLLPIHPMELFQGRSITASVFGGFKPKTQLPFFITQCLQGLLNLDLFISHQLPFHDINEAMQLLHQGKALRCLLHL.

Residues cysteine 47, threonine 49, histidine 70, cysteine 100, cysteine 103, cysteine 106, cysteine 114, and cysteine 180 each coordinate Zn(2+). An alcohol is bound by residues threonine 49 and histidine 70. Threonine 49 serves as a coordination point for NAD(+). NAD(+) is bound by residues 205–210 (GLGAVG), aspartate 229, lysine 234, 298–300 (LGV), phenylalanine 325, and arginine 375.

The protein belongs to the zinc-containing alcohol dehydrogenase family. Class-III subfamily. As to quaternary structure, homodimer. The cofactor is Zn(2+).

The protein resides in the cytoplasm. It catalyses the reaction a primary alcohol + NAD(+) = an aldehyde + NADH + H(+). It carries out the reaction a secondary alcohol + NAD(+) = a ketone + NADH + H(+). This Arabidopsis thaliana (Mouse-ear cress) protein is Alcohol dehydrogenase-like 4.